The following is a 116-amino-acid chain: Large ribosomal subunit protein uL18 (116 aa).

It belongs to the universal ribosomal protein uL18 family. In terms of assembly, part of the 50S ribosomal subunit; part of the 5S rRNA/L5/L18/L25 subcomplex. Contacts the 5S and 23S rRNAs.

In terms of biological role, this is one of the proteins that bind and probably mediate the attachment of the 5S RNA into the large ribosomal subunit, where it forms part of the central protuberance. This chain is Large ribosomal subunit protein uL18, found in Acholeplasma laidlawii (strain PG-8A).